Consider the following 212-residue polypeptide: ATP-dependent dethiobiotin synthetase BioD (212 aa).

13–18 is a binding site for ATP; sequence GIGKTV. Thr-17 is a binding site for Mg(2+). Lys-33 is an active-site residue. Glu-100 contacts Mg(2+). ATP-binding positions include 100–103 and 184–186; these read EGAG and PHV.

The protein belongs to the dethiobiotin synthetase family. Homodimer. Mg(2+) serves as cofactor.

It is found in the cytoplasm. The catalysed reaction is (7R,8S)-7,8-diammoniononanoate + CO2 + ATP = (4R,5S)-dethiobiotin + ADP + phosphate + 3 H(+). Its pathway is cofactor biosynthesis; biotin biosynthesis; biotin from 7,8-diaminononanoate: step 1/2. Functionally, catalyzes a mechanistically unusual reaction, the ATP-dependent insertion of CO2 between the N7 and N8 nitrogen atoms of 7,8-diaminopelargonic acid (DAPA, also called 7,8-diammoniononanoate) to form a ureido ring. In Nitrobacter hamburgensis (strain DSM 10229 / NCIMB 13809 / X14), this protein is ATP-dependent dethiobiotin synthetase BioD.